The sequence spans 143 residues: Transcriptional regulator MraZ (143 aa).

2 consecutive SpoVT-AbrB domains span residues 5–47 and 76–119; these read EYQH…PKDE and AIES…SKDN.

This sequence belongs to the MraZ family. Forms oligomers.

The protein resides in the cytoplasm. Its subcellular location is the nucleoid. In Oenococcus oeni (strain ATCC BAA-331 / PSU-1), this protein is Transcriptional regulator MraZ.